A 124-amino-acid polypeptide reads, in one-letter code: Fluoride-specific ion channel FluC (124 aa).

Transmembrane regions (helical) follow at residues 36–56 (VGTM…VVVL), 63–83 (YAPF…AFSL), and 99–119 (AYVG…MAAV). Na(+) is bound by residues Gly-73 and Thr-76.

The protein belongs to the fluoride channel Fluc/FEX (TC 1.A.43) family.

The protein localises to the cell inner membrane. The enzyme catalyses fluoride(in) = fluoride(out). With respect to regulation, na(+) is not transported, but it plays an essential structural role and its presence is essential for fluoride channel function. Functionally, fluoride-specific ion channel. Important for reducing fluoride concentration in the cell, thus reducing its toxicity. The protein is Fluoride-specific ion channel FluC of Cereibacter sphaeroides (strain ATCC 17029 / ATH 2.4.9) (Rhodobacter sphaeroides).